We begin with the raw amino-acid sequence, 359 residues long: Ferredoxin--NADP reductase (359 aa).

The FAD site is built by aspartate 48, glutamine 56, tyrosine 61, alanine 101, phenylalanine 139, aspartate 304, and serine 345. The segment at 340-359 (VHTHTSNDTNLQSRLHAAAE) is disordered. Over residues 341–352 (HTHTSNDTNLQS) the composition is skewed to polar residues.

The protein belongs to the ferredoxin--NADP reductase type 2 family. In terms of assembly, homodimer. The cofactor is FAD.

It catalyses the reaction 2 reduced [2Fe-2S]-[ferredoxin] + NADP(+) + H(+) = 2 oxidized [2Fe-2S]-[ferredoxin] + NADPH. In Ralstonia nicotianae (strain ATCC BAA-1114 / GMI1000) (Ralstonia solanacearum), this protein is Ferredoxin--NADP reductase.